The following is a 341-amino-acid chain: Serine/threonine-protein kinase-like protein At5g23170 (341 aa).

The 283-residue stretch at 16–298 (FSPSKLIGKG…FGEITAEIVA (283 aa)) folds into the Protein kinase domain. ATP is bound by residues 22-30 (IGKGSHGYV) and K51. A disordered region spans residues 52-75 (TPSSLSPSSPSSSSSSKSEQTKKL). Low complexity predominate over residues 53-69 (PSSLSPSSPSSSSSSKS). D153 functions as the Proton acceptor in the catalytic mechanism. Residues 311 to 332 (MSVLRRVVKLKRRKKRLRETLT) adopt a coiled-coil conformation.

This sequence belongs to the protein kinase superfamily. Ser/Thr protein kinase family. In terms of tissue distribution, ubiquitous. Higher expression in mature stamina and pollen.

The catalysed reaction is L-seryl-[protein] + ATP = O-phospho-L-seryl-[protein] + ADP + H(+). It catalyses the reaction L-threonyl-[protein] + ATP = O-phospho-L-threonyl-[protein] + ADP + H(+). This chain is Serine/threonine-protein kinase-like protein At5g23170, found in Arabidopsis thaliana (Mouse-ear cress).